The chain runs to 291 residues: Co-chaperone protein DjlA (291 aa).

At 1–6 (MRYWGK) the chain is on the periplasmic side. The chain crosses the membrane as a helical span at residues 7–31 (LLGLALGIVSSTGIWGMIMGLLMGH). The Cytoplasmic segment spans residues 32-291 (WIDRARASRR…ELLKSANQTK (260 aa)). Residues 177–223 (ESPTGQQSRQNQSRQNGKSQQRRNNGYSNGHSYGGQRPPSPLRGPTV) form a disordered region. The span at 181–211 (GQQSRQNQSRQNGKSQQRRNNGYSNGHSYGG) shows a compositional bias: low complexity. Residues 225-291 (SACRTLGVRS…ELLKSANQTK (67 aa)) enclose the J domain.

In terms of assembly, homodimer.

The protein resides in the cell inner membrane. Its function is as follows. Regulatory DnaK co-chaperone. Direct interaction between DnaK and DjlA is needed for the induction of the wcaABCDE operon, involved in the synthesis of a colanic acid polysaccharide capsule, possibly through activation of the RcsB/RcsC phosphotransfer signaling pathway. The colanic acid capsule may help the bacterium survive conditions outside the host. The sequence is that of Co-chaperone protein DjlA from Pectobacterium atrosepticum (strain SCRI 1043 / ATCC BAA-672) (Erwinia carotovora subsp. atroseptica).